We begin with the raw amino-acid sequence, 294 residues long: Formamidopyrimidine-DNA glycosylase (294 aa).

Proline 2 (schiff-base intermediate with DNA) is an active-site residue. Glutamate 3 acts as the Proton donor in catalysis. Lysine 58 acts as the Proton donor; for beta-elimination activity in catalysis. Positions 105, 124, and 167 each coordinate DNA. The segment at 258-294 (QVYDREGEPCRTRGCKGTVKRFTQNGRSTFWCPSCQK) adopts an FPG-type zinc-finger fold. Arginine 284 acts as the Proton donor; for delta-elimination activity in catalysis.

The protein belongs to the FPG family. Monomer. Zn(2+) serves as cofactor.

The enzyme catalyses Hydrolysis of DNA containing ring-opened 7-methylguanine residues, releasing 2,6-diamino-4-hydroxy-5-(N-methyl)formamidopyrimidine.. It catalyses the reaction 2'-deoxyribonucleotide-(2'-deoxyribose 5'-phosphate)-2'-deoxyribonucleotide-DNA = a 3'-end 2'-deoxyribonucleotide-(2,3-dehydro-2,3-deoxyribose 5'-phosphate)-DNA + a 5'-end 5'-phospho-2'-deoxyribonucleoside-DNA + H(+). In terms of biological role, involved in base excision repair of DNA damaged by oxidation or by mutagenic agents. Acts as a DNA glycosylase that recognizes and removes damaged bases. Has a preference for oxidized purines, such as 7,8-dihydro-8-oxoguanine (8-oxoG). Has AP (apurinic/apyrimidinic) lyase activity and introduces nicks in the DNA strand. Cleaves the DNA backbone by beta-delta elimination to generate a single-strand break at the site of the removed base with both 3'- and 5'-phosphates. The protein is Formamidopyrimidine-DNA glycosylase of Afipia carboxidovorans (strain ATCC 49405 / DSM 1227 / KCTC 32145 / OM5) (Oligotropha carboxidovorans).